We begin with the raw amino-acid sequence, 110 residues long: UPF0060 membrane protein Bcen_0802 (110 aa).

Transmembrane regions (helical) follow at residues 9–29 (ALFA…WLVL), 34–54 (PAWL…LLTL), 66–86 (YGGV…GVAL), and 88–108 (RWDV…ALQP).

Belongs to the UPF0060 family.

Its subcellular location is the cell inner membrane. This Burkholderia orbicola (strain AU 1054) protein is UPF0060 membrane protein Bcen_0802.